Reading from the N-terminus, the 254-residue chain is Low affinity immunoglobulin gamma Fc region receptor III-A (254 aa).

The signal sequence occupies residues 1 to 20 (MWQLLLPTALLLLVSAGMRA). Over 21–206 (EDLPKAVVFL…SSISSFFPPG (186 aa)) the chain is Extracellular. 2 Ig-like C2-type domains span residues 24 to 105 (PKAV…LEVH) and 107 to 189 (GWLL…VNIT). Cystine bridges form between Cys-47/Cys-89 and Cys-128/Cys-172. A glycan (N-linked (GlcNAc...) asparagine) is linked at Asn-187. Residues 207-229 (YQVSFCLVMVLLFAVDTGLYFSV) form a helical membrane-spanning segment. At 230-254 (KKSVPSSTRDWEDHKFKWSKDPQDK) the chain is on the cytoplasmic side.

As to quaternary structure, forms a heterooligomeric complex with ITAM-containing signaling subunits, either a homodimer of CD247, a homodimer of FCER1G or a heterodimer of CD247 and FCER1G, to form a functional receptor complex. Interacts (via transmembrane domain) with signaling subunits; this interaction is a prerequisite for receptor complex expression on the cell surface and intracellular signal transduction. Binds the Fc region of antigen-complexed IgG with a preference for IgG1 and IgG3 isotypes. Interacts with CD2; this interaction is involved in NK cell activation and cytotoxicity. Interacts with S100A4; this interaction inhibits PKC-dependent phosphorylation of FCGR3A. Post-translationally, glycosylated. Glycosylation plays an inhibitory role in the interaction with IgG1 and IgG2. Undergoes rapid ectodomain shedding upon NK cell stimulation. The soluble form is produced by a proteolytic cleavage mediated by ADAM17. Repeated stimulation causes receptor shedding, a mechanism that allows for increased NK cell motility and detachment from opsonized target cells while avoiding activation-induced NK cell apoptosis. As to expression, lymphocytes and monocytes.

The protein localises to the cell membrane. It is found in the secreted. Receptor for the invariable Fc fragment of immunoglobulin gamma (IgG). Optimally activated upon binding of clustered antigen-IgG complexes displayed on cell surfaces, triggers lysis of antibody-coated cells, a process known as antibody-dependent cellular cytotoxicity (ADCC). Does not bind free monomeric IgG, thus avoiding inappropriate effector cell activation in the absence of antigenic trigger. Mediates IgG effector functions on natural killer (NK) cells. Binds antigen-IgG complexes generated upon infection and triggers NK cell-dependent cytokine production and degranulation to limit viral load and propagation. Involved in the generation of memory-like adaptive NK cells capable to produce high amounts of IFNG and to efficiently eliminate virus-infected cells via ADCC. Regulates NK cell survival and proliferation, in particular by preventing NK cell progenitor apoptosis. Fc-binding subunit that associates with CD247 and/or FCER1G adapters to form functional signaling complexes. Following the engagement of antigen-IgG complexes, triggers phosphorylation of immunoreceptor tyrosine-based activation motif (ITAM)-containing adapters with subsequent activation of phosphatidylinositol 3-kinase signaling and sustained elevation of intracellular calcium that ultimately drive NK cell activation. The ITAM-dependent signaling coupled to receptor phosphorylation by PKC mediates robust intracellular calcium flux that leads to production of pro-inflammatory cytokines, whereas in the absence of receptor phosphorylation it mainly activates phosphatidylinositol 3-kinase signaling leading to cell degranulation. Costimulates NK cells and trigger lysis of target cells independently of IgG binding. Mediates the antitumor activities of therapeutic antibodies. Upon ligation on monocytes triggers TNFA-dependent ADCC of IgG-coated tumor cells. Mediates enhanced ADCC in response to afucosylated IgGs. The protein is Low affinity immunoglobulin gamma Fc region receptor III-A of Macaca mulatta (Rhesus macaque).